We begin with the raw amino-acid sequence, 365 residues long: Histidinol-phosphate aminotransferase (365 aa).

Lys-222 carries the post-translational modification N6-(pyridoxal phosphate)lysine.

The protein belongs to the class-II pyridoxal-phosphate-dependent aminotransferase family. Histidinol-phosphate aminotransferase subfamily. As to quaternary structure, homodimer. The cofactor is pyridoxal 5'-phosphate.

It catalyses the reaction L-histidinol phosphate + 2-oxoglutarate = 3-(imidazol-4-yl)-2-oxopropyl phosphate + L-glutamate. The protein operates within amino-acid biosynthesis; L-histidine biosynthesis; L-histidine from 5-phospho-alpha-D-ribose 1-diphosphate: step 7/9. The protein is Histidinol-phosphate aminotransferase of Geobacillus sp. (strain WCH70).